The sequence spans 829 residues: MEEKRRKYSISSDNSDTTDGHVTSTSASRCSKLPSSTKSGWPRQNEKKPSEVFRTDLITAMKIPDSYQLSPDDYYILADPWRQEWEKGVQVPAGAEAIPEPVVRLLPPLKGPPTQMSPDSPTLGEGAHPDWPGGSRYDLDEIDAYWLELLNSELKEMEKPELDELTLERVLEELETLCHQNMAQAIETQEGLGIEYDEDVVCDVCRSPEGEDGNEMVFCDKCNVCVHQACYGILKVPTGSWLCRTCALGVQPKCLLCPKRGGALKPTRSGTKWVHVSCALWIPEVSIGCPEKMEPITKISHIPASRWALSCSLCKECTGTCIQCSMPSCITAFHVTCAFDRGLEMRTILADNDEVKFKSLCQEHSDGGPRSEPTSEPVEPSQAVEDLEKVTLRKQRLQQLEENFYELVEPAEVAERLDLAEALVDFIYQYWKLKRRANANQPLLTPKTDEVDNLAQQEQDVLYRRLKLFTHLRQDLERVRNLCYMVTRRERTKHTICKLQEQIFHLQMKLIEQDLCREPSGRRSKGKKNDSKRKGREGPKGSSPEKKEKVKAGPESVLGQLGLSTSFPIDGTFFNSWLAQSVQITAEDMAMSEWSLNSGHREDPAPGLLSEELLQDEETLLSFMRDPSLRPGDPARKARGRTRLPAKKKPSPLQDGPSARTTPDKQPKKAWAQDGKGTQGPPMRKPPRRTSSHLPSSPAAGDCPVPATLESPPPLASEILDKTAPMASDLNVQVPGPTVSPKPLGRLRPPREMKVSRKSPGARSDAGTGLPSAVAERPKVSLHFDTEADGYFSDEEMSDSEVEAEDSGVQRASREAGAEEVVRMGVLAS.

The segment at 1–52 is disordered; that stretch reads MEEKRRKYSISSDNSDTTDGHVTSTSASRCSKLPSSTKSGWPRQNEKKPSEV. Ser-9 and Ser-15 each carry phosphoserine. The segment covering 9–39 has biased composition (polar residues); that stretch reads SISSDNSDTTDGHVTSTSASRCSKLPSSTKS. An N6-acetyllysine mark is found at Lys-32 and Lys-38. At Ser-117 the chain carries Phosphoserine. Residues 199 to 249 form a PHD-type 1 zinc finger; the sequence is DVVCDVCRSPEGEDGNEMVFCDKCNVCVHQACYGILKVPTGSWLCRTCALG. A C2HC pre-PHD-type zinc finger spans residues 251-285; the sequence is QPKCLLCPKRGGALKPTRSGTKWVHVSCALWIPEV. An N6-acetyllysine modification is found at Lys-298. A PHD-type 2 zinc finger spans residues 309 to 365; the sequence is LSCSLCKECTGTCIQCSMPSCITAFHVTCAFDRGLEMRTILADNDEVKFKSLCQEHS. 3 disordered regions span residues 362-383, 517-555, and 622-817; these read QEHSDGGPRSEPTSEPVEPSQA, REPSGRRSKGKKNDSKRKGREGPKGSSPEKKEKVKAGPE, and SFMR…REAG. The segment covering 522-535 has biased composition (basic residues); that stretch reads RRSKGKKNDSKRKG. Residues 536-552 are compositionally biased toward basic and acidic residues; the sequence is REGPKGSSPEKKEKVKA. Residues 637–650 show a composition bias toward basic residues; it reads KARGRTRLPAKKKP. A compositionally biased stretch (basic and acidic residues) spans 776–786; that stretch reads ERPKVSLHFDT. The segment covering 792-806 has biased composition (acidic residues); the sequence is FSDEEMSDSEVEAED.

Belongs to the JADE family. Component of the HBO1 complex composed at least of ING4 or ING5, MYST2/HBO1, MEAF6, and one of JADE1, JADE2 and JADE3. Interacts (via C-terminus) with KDM1A (via AOD/Tower domain).

It catalyses the reaction S-ubiquitinyl-[E2 ubiquitin-conjugating enzyme]-L-cysteine + [acceptor protein]-L-lysine = [E2 ubiquitin-conjugating enzyme]-L-cysteine + N(6)-ubiquitinyl-[acceptor protein]-L-lysine.. The protein operates within protein modification; protein ubiquitination. In terms of biological role, scaffold subunit of some HBO1 complexes, which have a histone H4 acetyltransferase activity. Acts as a E3 ubiquitin-protein ligase mediating the ubiquitination and subsequent proteasomal degradation of target protein histone demethylase KDM1A. Also acts as a ubiquitin ligase E3 toward itself. Positive regulator of neurogenesis. The polypeptide is E3 ubiquitin-protein ligase Jade-2 (Jade2) (Mus musculus (Mouse)).